A 1008-amino-acid polypeptide reads, in one-letter code: Collagen alpha-1(I) chain (1008 aa).

Residues 1–1008 (GGISVPGPMG…PGPPGPPGPP (1008 aa)) form a disordered region. 4-hydroxyproline occurs at positions 18, 21, 23, 32, 35, 38, 52, 67, 73, 82, and 88. A compositionally biased stretch (basic and acidic residues) spans 55-69 (NGDDGEAGKPGRPGE). Position 91 is a 5-hydroxylysine; alternate (lysine 91). Residue lysine 91 is glycosylated (O-linked (Gal...) hydroxylysine; alternate). The residue at position 97 (serine 97) is a Phosphoserine. Low complexity predominate over residues 105–121 (DAGPAGPKGEPGSPGEN). A 4-hydroxyproline mark is found at proline 115, proline 118, proline 124, proline 133, proline 139, proline 160, proline 169, proline 172, proline 199, proline 202, proline 214, proline 220, proline 229, proline 235, and proline 238. Low complexity predominate over residues 139–157 (PGASGPAGARGNDGAAGAA). A compositionally biased stretch (pro residues) spans 159–171 (PPGPTGPAGPPGF). Low complexity predominate over residues 205–235 (AGAAGPAGNPGADGQPGAKGANGAPGIAGAP). Residues 236-255 (GFPGRGPSGPQGPSGPGPKG) show a composition bias toward gly residues. At lysine 254 the chain carries 5-hydroxylysine. 8 positions are modified to 4-hydroxyproline: proline 260, proline 263, proline 275, proline 284, proline 299, proline 305, proline 314, and proline 320. The segment covering 309–318 (GERGGPGSRG) has biased composition (gly residues). Lysine 329 bears the 5-hydroxylysine mark. 4-hydroxyproline is present on residues proline 338, proline 347, proline 353, proline 359, proline 368, proline 371, proline 380, proline 389, proline 395, proline 407, proline 416, proline 425, proline 428, proline 446, proline 463, proline 469, proline 475, proline 481, proline 487, proline 493, proline 505, proline 514, proline 523, proline 535, proline 538, proline 544, proline 550, and proline 559. Low complexity predominate over residues 362–388 (KGLTGSPGSPGPDGKTGPPGPAGQDGR). Low complexity predominate over residues 397-416 (ARGQAGVMGFPGPKGAAGEP). Residues 475-484 (PGEAGKPGEQ) are compositionally biased toward low complexity. Low complexity predominate over residues 519–547 (PRGAPGNDGAKGDAGAPGAPGSQGAPGLQ). Position 571 is a 5-hydroxylysine (lysine 571). Proline 577, proline 592, and proline 598 each carry 4-hydroxyproline. Over residues 604-618 (SGPSGPAGPTGARGA) the composition is skewed to low complexity. Phosphoserine is present on serine 607. 4-hydroxyproline is present on residues proline 619, proline 625, proline 628, proline 637, proline 643, proline 661, proline 670, and proline 679. The segment covering 631–658 (AGFAGPPGADGQPGAKGEPGDAGAKGDA) has biased composition (low complexity). Pro residues predominate over residues 660–672 (PPGPAGPTGPPGP). A 5-hydroxylysine modification is found at lysine 682. The segment covering 687–703 (SAGPPGATGFPGAAGRV) has biased composition (low complexity). A 4-hydroxyproline mark is found at proline 691 and proline 697. Proline 705 carries the post-translational modification 3-hydroxyproline. 4-hydroxyproline occurs at positions 706, 717, 738, 747, 755, 764, 781, 790, 793, 799, 814, 820, 826, 835, and 841. Low complexity predominate over residues 731–740 (ETGPAGRPGE). Positions 752–764 (KGSPGADGPAGAP) are enriched in low complexity. A compositionally biased stretch (pro residues) spans 813 to 823 (PPGPVGPPGLA). The span at 825–840 (PPGESGREGSPGAEGS) shows a compositional bias: low complexity. The residue at position 850 (lysine 850) is a 5-hydroxylysine. Residues 858 to 873 (PGPPGAPGAPGAPGPV) are compositionally biased toward pro residues. A 4-hydroxyproline mark is found at proline 861, proline 864, and proline 867. A compositionally biased stretch (low complexity) spans 894 to 908 (AGPAGARGPAGPQGP). The segment covering 909–923 (RGDKGETGEQGDRGI) has biased composition (basic and acidic residues). Position 912 is a 5-hydroxylysine (lysine 912). The residue at position 924 (lysine 924) is a 5-hydroxylysine; alternate. The O-linked (Gal...) hydroxylysine; alternate glycan is linked to lysine 924. Proline 939, proline 942, proline 960, and proline 975 each carry 4-hydroxyproline. Residues 942 to 975 (PGEQGPSGASGPAGPRGPPGSAGSPGKDGLNGLP) are compositionally biased toward low complexity. Proline 980 bears the 3-hydroxyproline mark. Proline 981 carries the 4-hydroxyproline modification. Positions 993–1008 (VGPPGPPGPPGPPGPP) are enriched in pro residues. A 3-hydroxyproline modification is found at proline 995. Proline 996 is modified (4-hydroxyproline). Proline 998 carries the post-translational modification 3-hydroxyproline. Position 999 is a 4-hydroxyproline (proline 999). Proline 1001 bears the 3-hydroxyproline mark. A 4-hydroxyproline mark is found at proline 1002, proline 1005, and proline 1008.

Belongs to the fibrillar collagen family. As to quaternary structure, trimers of one alpha 2(I) and two alpha 1(I) chains. Contains mostly 4-hydroxyproline. Proline residues at the third position of the tripeptide repeating unit (G-X-Y) are hydroxylated in some or all of the chains. In terms of processing, contains 3-hydroxyproline at a few sites. This modification occurs on the first proline residue in the sequence motif Gly-Pro-Hyp, where Hyp is 4-hydroxyproline. Post-translationally, lysine residues at the third position of the tripeptide repeating unit (G-X-Y) are 5-hydroxylated in some or all of the chains. O-glycosylated on hydroxylated lysine residues. The O-linked glycan consists of a Glc-Gal disaccharide. Expressed in bones.

Its subcellular location is the secreted. It is found in the extracellular space. The protein localises to the extracellular matrix. Functionally, type I collagen is a member of group I collagen (fibrillar forming collagen). This chain is Collagen alpha-1(I) chain, found in Paramylodon harlani (Harlan's ground sloth).